Consider the following 345-residue polypeptide: Ferrochelatase (345 aa).

Residues His215 and Glu296 each contribute to the Fe cation site.

The protein belongs to the ferrochelatase family.

The protein localises to the cytoplasm. It carries out the reaction heme b + 2 H(+) = protoporphyrin IX + Fe(2+). The protein operates within porphyrin-containing compound metabolism; protoheme biosynthesis; protoheme from protoporphyrin-IX: step 1/1. Catalyzes the ferrous insertion into protoporphyrin IX. This is Ferrochelatase from Nitrobacter hamburgensis (strain DSM 10229 / NCIMB 13809 / X14).